Reading from the N-terminus, the 316-residue chain is Ribosomal protein L11 methyltransferase (316 aa).

Residues Thr-163, Gly-184, Asp-206, and Asn-249 each contribute to the S-adenosyl-L-methionine site.

The protein belongs to the methyltransferase superfamily. PrmA family.

The protein localises to the cytoplasm. The enzyme catalyses L-lysyl-[protein] + 3 S-adenosyl-L-methionine = N(6),N(6),N(6)-trimethyl-L-lysyl-[protein] + 3 S-adenosyl-L-homocysteine + 3 H(+). Methylates ribosomal protein L11. The chain is Ribosomal protein L11 methyltransferase from Pediococcus pentosaceus (strain ATCC 25745 / CCUG 21536 / LMG 10740 / 183-1w).